The sequence spans 87 residues: Putative defensin-like protein 317 (87 aa).

The N-terminal stretch at 1 to 24 is a signal peptide; the sequence is MKSFLVAFLIVLVFFCVEMKIGNG. 3 cysteine pairs are disulfide-bonded: cysteine 38–cysteine 71, cysteine 47–cysteine 80, and cysteine 56–cysteine 82.

This sequence belongs to the DEFL family.

The protein localises to the secreted. The sequence is that of Putative defensin-like protein 317 from Arabidopsis thaliana (Mouse-ear cress).